The chain runs to 370 residues: Queuine tRNA-ribosyltransferase (370 aa).

The active-site Proton acceptor is D89. Residues 89-93, D143, Q185, and G212 contribute to the substrate site; that span reads DSGGF. Residues 243-249 form an RNA binding region; sequence GVGTPED. Catalysis depends on D262, which acts as the Nucleophile. Residues 267–271 form an RNA binding; important for wobble base 34 recognition region; it reads TRNAR. Zn(2+) contacts are provided by C300, C302, C305, and H331.

The protein belongs to the queuine tRNA-ribosyltransferase family. In terms of assembly, homodimer. Within each dimer, one monomer is responsible for RNA recognition and catalysis, while the other monomer binds to the replacement base PreQ1. Zn(2+) serves as cofactor.

It catalyses the reaction 7-aminomethyl-7-carbaguanine + guanosine(34) in tRNA = 7-aminomethyl-7-carbaguanosine(34) in tRNA + guanine. The protein operates within tRNA modification; tRNA-queuosine biosynthesis. Functionally, catalyzes the base-exchange of a guanine (G) residue with the queuine precursor 7-aminomethyl-7-deazaguanine (PreQ1) at position 34 (anticodon wobble position) in tRNAs with GU(N) anticodons (tRNA-Asp, -Asn, -His and -Tyr). Catalysis occurs through a double-displacement mechanism. The nucleophile active site attacks the C1' of nucleotide 34 to detach the guanine base from the RNA, forming a covalent enzyme-RNA intermediate. The proton acceptor active site deprotonates the incoming PreQ1, allowing a nucleophilic attack on the C1' of the ribose to form the product. After dissociation, two additional enzymatic reactions on the tRNA convert PreQ1 to queuine (Q), resulting in the hypermodified nucleoside queuosine (7-(((4,5-cis-dihydroxy-2-cyclopenten-1-yl)amino)methyl)-7-deazaguanosine). The chain is Queuine tRNA-ribosyltransferase from Methylobacillus flagellatus (strain ATCC 51484 / DSM 6875 / VKM B-1610 / KT).